Consider the following 282-residue polypeptide: Chromatin modification-related protein YNG2 (282 aa).

Residues 35 to 86 (LIEEKKKYEQKESQIHKFIRQQGSIPKHPQEDGLDKEIKESLLKCQSLQREK) adopt a coiled-coil conformation. Residues 123–217 (DGDMDSAAEA…KGQNGSPENE (95 aa)) form a disordered region. A compositionally biased stretch (low complexity) spans 129-143 (AAEASRESSVVSNSS). Serine 183 carries the post-translational modification Phosphoserine. Position 185 is a phosphothreonine (threonine 185). Serine 188 is subject to Phosphoserine. The segment covering 191–203 (IEKKIARTKEFKN) has biased composition (basic and acidic residues). Over residues 204-214 (SRNGKGQNGSP) the composition is skewed to polar residues. The segment at 222 to 271 (TLYCFCQRVSFGEMVACDGPNCKYEWFHYDCVNLKEPPKGTWYCPECKIE) adopts a PHD-type zinc-finger fold. 8 residues coordinate Zn(2+): cysteine 225, cysteine 227, cysteine 238, cysteine 243, histidine 249, cysteine 252, cysteine 265, and cysteine 268.

The protein belongs to the ING family. In terms of assembly, interacts with H3K4me3 and to a lesser extent with H3K4me2. Component of the NuA4 histone acetyltransferase complex composed of at least ACT1, ARP4, YAF9, VID21, SWC4, EAF3, EAF5, EAF6, EAF7, EPL1, ESA1, TRA1 and YNG2.

It localises to the nucleus. Its function is as follows. Component of the NuA4 histone acetyltransferase complex which is involved in transcriptional activation of selected genes principally by acetylation of nucleosomal histone H4 and H2A. The NuA4 complex is also involved in DNA repair. Involved in cell cycle progression and meiosis. The sequence is that of Chromatin modification-related protein YNG2 (YNG2) from Saccharomyces cerevisiae (strain ATCC 204508 / S288c) (Baker's yeast).